A 471-amino-acid chain; its full sequence is Tryptophanase (471 aa).

At Lys-270 the chain carries N6-(pyridoxal phosphate)lysine.

The protein belongs to the beta-eliminating lyase family. In terms of assembly, homotetramer. The cofactor is pyridoxal 5'-phosphate.

It carries out the reaction L-tryptophan + H2O = indole + pyruvate + NH4(+). It participates in amino-acid degradation; L-tryptophan degradation via pyruvate pathway; indole and pyruvate from L-tryptophan: step 1/1. This chain is Tryptophanase, found in Histophilus somni (strain 129Pt) (Haemophilus somnus).